The following is a 727-amino-acid chain: Elongation factor 2 (727 aa).

The region spanning 19–260 (DQIRNMGICA…MSIKHLPNPL (242 aa)) is the tr-type G domain. Residues 28–35 (AHIDHGKT), 94–98 (DTPGH), and 148–151 (NKVD) contribute to the GTP site. The residue at position 603 (His-603) is a Diphthamide.

The protein belongs to the TRAFAC class translation factor GTPase superfamily. Classic translation factor GTPase family. EF-G/EF-2 subfamily.

The protein resides in the cytoplasm. In terms of biological role, catalyzes the GTP-dependent ribosomal translocation step during translation elongation. During this step, the ribosome changes from the pre-translocational (PRE) to the post-translocational (POST) state as the newly formed A-site-bound peptidyl-tRNA and P-site-bound deacylated tRNA move to the P and E sites, respectively. Catalyzes the coordinated movement of the two tRNA molecules, the mRNA and conformational changes in the ribosome. The polypeptide is Elongation factor 2 (Methanococcus maripaludis (strain C5 / ATCC BAA-1333)).